Here is a 329-residue protein sequence, read N- to C-terminus: MQTNLLKPKTINVEQLGANRAKVTLEPFERGYGHTLGNALRRVLLSSMVGHAATEVTIAGVLHEYSSIDGVQEDVVNILLNLKGVVFKLHNRDEVTLSLRKDGEGPVTAADIQTPHDVEIINPEHVIVNLSHGGKIDMQIKVENGRGYVPGTMRRYGDESPKSIGRIVLDASFSPVKRVSYTVESARVEQRTDLDKLVLEIETNGAVTAEDAVRASAKILVEQLAVFAQLEGNELAAFDAPVQRSSQQFDPILLRPVDELELTVRSANCLKAENIYYIGDLIQRTENELLKTPNLGRKSLNEIKEVLASRGLTLGMRLESWPPAGLDKR.

The segment at 1 to 231 (MQTNLLKPKT…EQLAVFAQLE (231 aa)) is alpha N-terminal domain (alpha-NTD). Positions 249 to 329 (FDPILLRPVD…SWPPAGLDKR (81 aa)) are alpha C-terminal domain (alpha-CTD).

It belongs to the RNA polymerase alpha chain family. As to quaternary structure, homodimer. The RNAP catalytic core consists of 2 alpha, 1 beta, 1 beta' and 1 omega subunit. When a sigma factor is associated with the core the holoenzyme is formed, which can initiate transcription.

The catalysed reaction is RNA(n) + a ribonucleoside 5'-triphosphate = RNA(n+1) + diphosphate. In terms of biological role, DNA-dependent RNA polymerase catalyzes the transcription of DNA into RNA using the four ribonucleoside triphosphates as substrates. The polypeptide is DNA-directed RNA polymerase subunit alpha (Polaromonas sp. (strain JS666 / ATCC BAA-500)).